The following is a 182-amino-acid chain: NADH-quinone oxidoreductase subunit I (182 aa).

2 consecutive 4Fe-4S ferredoxin-type domains span residues I50–A82 and E92–D121. 8 residues coordinate [4Fe-4S] cluster: C62, C65, C68, C72, C101, C104, C107, and C111.

The protein belongs to the complex I 23 kDa subunit family. NDH-1 is composed of 14 different subunits. Subunits NuoA, H, J, K, L, M, N constitute the membrane sector of the complex. The cofactor is [4Fe-4S] cluster.

The protein resides in the cell inner membrane. The enzyme catalyses a quinone + NADH + 5 H(+)(in) = a quinol + NAD(+) + 4 H(+)(out). Functionally, NDH-1 shuttles electrons from NADH, via FMN and iron-sulfur (Fe-S) centers, to quinones in the respiratory chain. The immediate electron acceptor for the enzyme in this species is believed to be ubiquinone. Couples the redox reaction to proton translocation (for every two electrons transferred, four hydrogen ions are translocated across the cytoplasmic membrane), and thus conserves the redox energy in a proton gradient. This chain is NADH-quinone oxidoreductase subunit I, found in Psychrobacter arcticus (strain DSM 17307 / VKM B-2377 / 273-4).